The following is a 556-amino-acid chain: 2-isopropylmalate synthase (556 aa).

The Pyruvate carboxyltransferase domain maps to 33 to 307 (PIWCSSDLRD…NPELDFSDID (275 aa)). The Mg(2+) site is built by aspartate 42, histidine 246, histidine 248, and asparagine 282. The interval 439-556 (ANTPYALISH…SLSQAQAKAA (118 aa)) is regulatory domain.

Belongs to the alpha-IPM synthase/homocitrate synthase family. LeuA type 2 subfamily. In terms of assembly, homodimer. Requires Mg(2+) as cofactor.

It is found in the cytoplasm. It catalyses the reaction 3-methyl-2-oxobutanoate + acetyl-CoA + H2O = (2S)-2-isopropylmalate + CoA + H(+). It participates in amino-acid biosynthesis; L-leucine biosynthesis; L-leucine from 3-methyl-2-oxobutanoate: step 1/4. Its function is as follows. Catalyzes the condensation of the acetyl group of acetyl-CoA with 3-methyl-2-oxobutanoate (2-ketoisovalerate) to form 3-carboxy-3-hydroxy-4-methylpentanoate (2-isopropylmalate). The polypeptide is 2-isopropylmalate synthase (Pseudomonas syringae pv. tomato (strain ATCC BAA-871 / DC3000)).